The primary structure comprises 2148 residues: General transcription factor 3C polypeptide 1 (2148 aa).

Residues 473 to 487 show a composition bias toward acidic residues; sequence GEEAFLSDSESEEES. Disordered regions lie at residues 473–568 and 587–609; these read GEEA…FDPH and NPKE…KPHK. A compositionally biased stretch (basic residues) spans 491–502; the sequence is GKRRGRGSRGHS. Residue Lys533 forms a Glycyl lysine isopeptide (Lys-Gly) (interchain with G-Cter in SUMO2) linkage. Ser666 bears the Phosphoserine mark. Disordered stretches follow at residues 717–771 and 818–863; these read STAN…EKMG and TGEQ…SSWE. 2 stretches are compositionally biased toward basic and acidic residues: residues 759–770 and 825–835; these read ESTRVKKTDEKM and HSERKTGKQEP. Residues Lys769 and Lys832 each participate in a glycyl lysine isopeptide (Lys-Gly) (interchain with G-Cter in SUMO2) cross-link. Ser1062 carries the post-translational modification Phosphoserine. Basic and acidic residues predominate over residues 1186–1195; sequence EHFELDREPT. Disordered regions lie at residues 1186–1238, 1597–1627, 1823–1881, 1893–1928, and 2127–2148; these read EHFE…KKLR, KSLG…SVEV, KASG…LPAK, SPRP…ESVG, and PRPS…ATSR. Position 1195 is a phosphothreonine (Thr1195). Positions 1198 to 1214 are enriched in basic residues; it reads RNRKVRGGKSQKRKRLK. Basic and acidic residues predominate over residues 1228–1238; it reads EHPEAKSKKLR. Positions 1605 to 1616 are enriched in acidic residues; that stretch reads LDDDDEEEDLDE. Phosphoserine is present on residues Ser1624, Ser1853, and Ser1893. A compositionally biased stretch (low complexity) spans 1903–1912; that stretch reads EAQAQFAAPE. Polar residues predominate over residues 2132–2148; that stretch reads SCYQSSAQPSTGVATSR.

The protein belongs to the TFIIIC subunit 1 family. Part of the TFIIIC subcomplex TFIIIC2, consisting of six subunits, GTF3C1, GTF3C2, GTF3C3, GTF3C4, GTF3C5 and GTF3C6. Interacts with IGHMBP2. Interacts with MAF1.

It localises to the nucleus. Required for RNA polymerase III-mediated transcription. Component of TFIIIC that initiates transcription complex assembly on tRNA and is required for transcription of 5S rRNA and other stable nuclear and cytoplasmic RNAs. Binds to the box B promoter element. The chain is General transcription factor 3C polypeptide 1 (Gtf3c1) from Rattus norvegicus (Rat).